The sequence spans 171 residues: MTKWFNVGKIVNTHGVKGEIRVVSRTDFPEERYKVGNTLYISNEKGGEPFPVKITSHRQHKTFDLLTFEGYGNVNEVEQFKGSLLKVPEDQLGELAEGEYYYHEIIGCNVVTEEGEALGTIKEVLSPGANDVWVIKRPKGQDLLIPYIDDVVLQVNIENKLVTIHVTEGLL.

The region spanning 96–170 (AEGEYYYHEI…LVTIHVTEGL (75 aa)) is the PRC barrel domain.

Belongs to the RimM family. In terms of assembly, binds ribosomal protein uS19.

It localises to the cytoplasm. Functionally, an accessory protein needed during the final step in the assembly of 30S ribosomal subunit, possibly for assembly of the head region. Essential for efficient processing of 16S rRNA. May be needed both before and after RbfA during the maturation of 16S rRNA. It has affinity for free ribosomal 30S subunits but not for 70S ribosomes. This Bacillus anthracis (strain A0248) protein is Ribosome maturation factor RimM.